We begin with the raw amino-acid sequence, 114 residues long: Dihydroneopterin monophosphate aldolase (114 aa).

3 residues coordinate Zn(2+): His-15, His-26, and His-28.

Belongs to the PTPS family. Zn(2+) is required as a cofactor.

The catalysed reaction is 7,8-dihydroneopterin 3'-phosphate = glycolaldehyde phosphate + 6-hydroxymethyl-7,8-dihydropterin. Catalyzes the conversion of 7,8-dihydroneopterin monophosphate (H2NMP) to 6-hydroxymethyl-7,8-dihydropterin (6-HMD). Cannot use 7,8-dihydroneopterin (H2Neo) or 7,8-dihydroneopterin triphosphate (H2NTP) as substrate. The protein is Dihydroneopterin monophosphate aldolase of Pyrococcus furiosus (strain ATCC 43587 / DSM 3638 / JCM 8422 / Vc1).